A 347-amino-acid polypeptide reads, in one-letter code: Large ribosomal subunit protein uL3 (347 aa).

The tract at residues 325-347 is disordered; that stretch reads RPPKKKPPVERPQITYISRESKQ.

Belongs to the universal ribosomal protein uL3 family. Part of the 50S ribosomal subunit. Forms a cluster with proteins L14 and L24e.

Functionally, one of the primary rRNA binding proteins, it binds directly near the 3'-end of the 23S rRNA, where it nucleates assembly of the 50S subunit. In Thermococcus onnurineus (strain NA1), this protein is Large ribosomal subunit protein uL3.